The chain runs to 282 residues: MKIVTTVQDMQQITSELRASGKSIGFVPTMGYLHEGHATLLRKAREENKIVVLSVFVNPLQFGPNEDLDRYPRDIDRDENVAKENGVDYLFYPSVEEMYPAEQTTTVEVVKRTDVLCGQQRPGHFAGVATVLMKLFNITVPTRAYFGMKDAQQVAVIEGFVTDFNIPVTIVPVDIVREEDGLAKSSRNVYLSQDEREEALHLYRSLCIAKERIEAGERNPEIITNLVKDYIETHTKGTVDYADLYAYPSLTMVEKVEGRIILAIAVKFENVRLIDNITLTVK.

An ATP-binding site is contributed by 30–37; sequence MGYLHEGH. Residue histidine 37 is the Proton donor of the active site. (R)-pantoate is bound at residue glutamine 61. Glutamine 61 is a beta-alanine binding site. An ATP-binding site is contributed by 147-150; the sequence is GMKD. Glutamine 153 is a binding site for (R)-pantoate. ATP-binding positions include valine 176 and 184–187; that span reads KSSR.

The protein belongs to the pantothenate synthetase family. Homodimer.

Its subcellular location is the cytoplasm. The enzyme catalyses (R)-pantoate + beta-alanine + ATP = (R)-pantothenate + AMP + diphosphate + H(+). It functions in the pathway cofactor biosynthesis; (R)-pantothenate biosynthesis; (R)-pantothenate from (R)-pantoate and beta-alanine: step 1/1. Functionally, catalyzes the condensation of pantoate with beta-alanine in an ATP-dependent reaction via a pantoyl-adenylate intermediate. This Bacillus cereus (strain ATCC 14579 / DSM 31 / CCUG 7414 / JCM 2152 / NBRC 15305 / NCIMB 9373 / NCTC 2599 / NRRL B-3711) protein is Pantothenate synthetase.